We begin with the raw amino-acid sequence, 974 residues long: Membrane-associated phosphatidylinositol transfer protein 3 (974 aa).

Phosphoserine occurs at positions 30, 31, 109, 295, 298, 321, 343, and 495. Residues 310-347 (CSLASSKRLSKSNVDVSSGVEDEDPKRPLPRKQSDSST) form a disordered region. Residues 312–325 (LASSKRLSKSNVDV) show a composition bias toward polar residues. The DDHD domain maps to 390–594 (FDFDVSDFFL…VAFILRQVMR (205 aa)). The segment at 497–535 (PLLDAPASPPQAPRFQRTERRLSKGSSHSDSSESSDSLA) is disordered. Low complexity predominate over residues 520–533 (KGSSHSDSSESSDS). Phosphoserine occurs at positions 612, 907, 928, and 946. The interval 927-974 (MSVQQPDPPAANPKPERAQSQPESDKDHERPLPALSWARGPPKFESVP) is disordered.

The protein belongs to the PtdIns transfer protein family. PI transfer class IIA subfamily. Interacts with PTK2B via its C-terminus.

The protein resides in the endomembrane system. Catalyzes the transfer of phosphatidylinositol and phosphatidylcholine between membranes (in vitro). Binds calcium ions. This Mus musculus (Mouse) protein is Membrane-associated phosphatidylinositol transfer protein 3 (Pitpnm3).